The following is a 133-amino-acid chain: ATP synthase epsilon chain (133 aa).

It belongs to the ATPase epsilon chain family. In terms of assembly, F-type ATPases have 2 components, CF(1) - the catalytic core - and CF(0) - the membrane proton channel. CF(1) has five subunits: alpha(3), beta(3), gamma(1), delta(1), epsilon(1). CF(0) has three main subunits: a, b and c.

It is found in the cell membrane. In terms of biological role, produces ATP from ADP in the presence of a proton gradient across the membrane. In Clostridium acetobutylicum (strain ATCC 824 / DSM 792 / JCM 1419 / IAM 19013 / LMG 5710 / NBRC 13948 / NRRL B-527 / VKM B-1787 / 2291 / W), this protein is ATP synthase epsilon chain (atpC).